A 274-amino-acid polypeptide reads, in one-letter code: Putative deoxyribonuclease TATDN1 homolog (274 aa).

Residues glutamate 105, histidine 139, histidine 162, and aspartate 208 each contribute to the a divalent metal cation site.

The protein belongs to the metallo-dependent hydrolases superfamily. TatD-type hydrolase family. The cofactor is a divalent metal cation.

It localises to the nucleus. Functionally, putative deoxyribonuclease. In Enterocytozoon bieneusi (strain H348) (Microsporidian parasite), this protein is Putative deoxyribonuclease TATDN1 homolog.